A 300-amino-acid chain; its full sequence is Ribosomal protein bS6--L-glutamate ligase (300 aa).

The ATP-grasp domain maps to 104 to 287 (MQLLARQGID…IAGKMIRWIE (184 aa)). ATP contacts are provided by residues K141, 178 to 179 (EY), D187, and 211 to 213 (RSN). Mg(2+)-binding residues include D248, E260, and N262. Positions 248, 260, and 262 each coordinate Mn(2+).

This sequence belongs to the RimK family. The cofactor is Mg(2+). Mn(2+) serves as cofactor.

Its function is as follows. An L-glutamate ligase that catalyzes the ATP-dependent post-translational addition of glutamate residues to the C-terminus of ribosomal protein bS6 (RpsF). Is also able to catalyze the synthesis of poly-alpha-glutamate in vitro, via ATP hydrolysis from unprotected glutamate as substrate. The number of glutamate residues added to either RpsF or to poly-alpha-glutamate changes with pH. This chain is Ribosomal protein bS6--L-glutamate ligase, found in Escherichia fergusonii (strain ATCC 35469 / DSM 13698 / CCUG 18766 / IAM 14443 / JCM 21226 / LMG 7866 / NBRC 102419 / NCTC 12128 / CDC 0568-73).